The following is a 453-amino-acid chain: MPREIVTVQLGQCGNQMGAVYWQRLCAEHGISSEGILEEWATEGGDRKDVFFYQADDEHYIPRAILVDLEPRVINNILASPYANLYNPENIFVSKDGGGAGNNWAQGYSAGERIYEDIMEMIDREAEGSDSLEGFMVMHSIAGGTGSGLGSFLLERLNDKFPKKLIQTYSVFPNAQEGDVVVQPYNSLLALKRLVNHADSVVVLDNGALARISADRLHVQTPSFDQTNQLVSTVIAASTQTLRYPGYMNNDLVGIIASLIPTPRCHFLMTSYTPFTSDQIDKAKTIRRTTVLDVMRRLLQPKNRMVLTTPSKTACYISILNIIQGEVDPTDVHQSLLRIRERQLANFIPWGPASIQVALTKRSPYVTTNHRVSGLMLANHTSVASLFKRMLDQFDRLRKRNAFIEQYKKEKMFANGLEEFDDARATCDELLKEYKACESPDYVSFGGPDGDQS.

142–148 is a binding site for GTP; sequence AGGTGSG.

It belongs to the tubulin family.

The protein resides in the cytoplasm. The protein localises to the cytoskeleton. Its subcellular location is the microtubule organizing center. It localises to the spindle pole body. Tubulin is the major constituent of microtubules. The gamma chain is found at microtubule organizing centers (MTOC) such as the spindle poles or the centrosome, suggesting that it is involved in the minus-end nucleation of microtubule assembly. The sequence is that of Tubulin gamma chain (TUB4) from Coprinopsis cinerea (strain Okayama-7 / 130 / ATCC MYA-4618 / FGSC 9003) (Inky cap fungus).